A 131-amino-acid chain; its full sequence is ER membrane protein complex subunit 5 (131 aa).

The Cytoplasmic segment spans residues 1-3 (MAP). Residues 4–22 (SLWKGLVGVGLFALAHAAF) form a helical membrane-spanning segment. The Lumenal portion of the chain corresponds to 23–43 (SAAQHRSYMRLTEKEDESLPI). The helical transmembrane segment at 44–63 (DIVLQTLLAFAVTCYGIVHI) threads the bilayer. Residues 64 to 131 (AGEFKDMDAT…KLRKFDSLRR (68 aa)) lie on the Cytoplasmic side of the membrane. Residue S120 is modified to Phosphoserine.

This sequence belongs to the membrane magnesium transporter (TC 1.A.67) family. Component of the ER membrane protein complex (EMC). In terms of tissue distribution, abundant in heart muscle and kidney with lower levels in liver and brain and very little expression in intestine or colon. In kidney, highest levels in distal convoluted tubule.

It localises to the endoplasmic reticulum membrane. It is found in the golgi apparatus membrane. The protein localises to the early endosome membrane. Part of the endoplasmic reticulum membrane protein complex (EMC) that enables the energy-independent insertion into endoplasmic reticulum membranes of newly synthesized membrane proteins. Preferentially accommodates proteins with transmembrane domains that are weakly hydrophobic or contain destabilizing features such as charged and aromatic residues. Involved in the cotranslational insertion of multi-pass membrane proteins in which stop-transfer membrane-anchor sequences become ER membrane spanning helices. It is also required for the post-translational insertion of tail-anchored/TA proteins in endoplasmic reticulum membranes. By mediating the proper cotranslational insertion of N-terminal transmembrane domains in an N-exo topology, with translocated N-terminus in the lumen of the ER, controls the topology of multi-pass membrane proteins like the G protein-coupled receptors. By regulating the insertion of various proteins in membranes, it is indirectly involved in many cellular processes. May be involved Mg(2+) transport. In Mus musculus (Mouse), this protein is ER membrane protein complex subunit 5.